The chain runs to 472 residues: MDTIDTPGEQGSQSFGNSLGARFDLPRKEQDPSQALAVASYQNKTDSQVVEEHLDELISLADSCGISVLETRSWILKTPSASTYINVGKLEEIEEILKEFPSIGTLIIDEEITPSQQRNLEKRLGLVVLDRTELILEIFSSRALTAEANIQVQLAQARYLLPRLKRLWGHLSRQKSGGGSGGFVKGEGEKQIELDRRMVRERIHKLSAQLKAVIKQRAERRKVKSRRGIPTFALIGYTNSGKSTLLNLLTAADTYVEDKLFATLDPKTRKCVLPGGRHVLLTDTVGFIRKLPHTLVAAFKSTLEAAFHEDVLLHVVDASHPLALEHVQTTYDLFQELKIEKPRIITVLNKVDRLPQGSIPMKLRLLSPLPVLISAKTGEGIQNLLSLMTEIIQEKSLHVTLNFPYTEYGKFTELCDAGVVASSRYQEDFLVVEAYLPKELQKKFRPFISYVFPEDCGDDEGRGPVLESSFGD.

The tract at residues 1–21 is disordered; that stretch reads MDTIDTPGEQGSQSFGNSLGA. Residues 230-396 enclose the Hflx-type G domain; that stretch reads PTFALIGYTN…LMTEIIQEKS (167 aa). GTP contacts are provided by residues 236-243, 261-265, 283-286, 349-352, and 374-376; these read GYTNSGKS, FATLD, DTVG, NKVD, and SAK. 2 residues coordinate Mg(2+): Ser243 and Thr263.

It belongs to the TRAFAC class OBG-HflX-like GTPase superfamily. HflX GTPase family. Monomer. Associates with the 50S ribosomal subunit. Mg(2+) serves as cofactor.

It is found in the cytoplasm. In terms of biological role, GTPase that associates with the 50S ribosomal subunit and may have a role during protein synthesis or ribosome biogenesis. Specific for GTP. This is GTPase HflX from Chlamydia pneumoniae (Chlamydophila pneumoniae).